The sequence spans 185 residues: UPF0397 protein AYWB_013 (185 aa).

A run of 5 helical transmembrane segments spans residues 13-33 (IGLSTTIFFVLSCFASIPVGF), 42-62 (AFLAFIAVAFGPSVGFYVGLI), 69-89 (FFLFGNVSWNWVLCSALIGFI), 109-129 (IVYFWLYQVACNFIIWGFFAP), and 148-168 (FLIVISNILAYSVVGIKLMTI).

The protein belongs to the UPF0397 family.

The protein localises to the cell membrane. This Aster yellows witches'-broom phytoplasma (strain AYWB) protein is UPF0397 protein AYWB_013.